We begin with the raw amino-acid sequence, 303 residues long: S-methyl-5'-thioadenosine phosphorylase 1 (303 aa).

Residues Ser14, 57 to 58 (RH), and 90 to 91 (SA) each bind phosphate. Met198 provides a ligand contact to substrate. Residue Ser199 participates in phosphate binding. Substrate is bound at residue 222-224 (DYD).

It belongs to the PNP/MTAP phosphorylase family. MTAP subfamily. Homotrimer.

It localises to the cytoplasm. The protein resides in the nucleus. It catalyses the reaction S-methyl-5'-thioadenosine + phosphate = 5-(methylsulfanyl)-alpha-D-ribose 1-phosphate + adenine. It participates in amino-acid biosynthesis; L-methionine biosynthesis via salvage pathway; S-methyl-5-thio-alpha-D-ribose 1-phosphate from S-methyl-5'-thioadenosine (phosphorylase route): step 1/1. In terms of biological role, catalyzes the reversible phosphorylation of S-methyl-5'-thioadenosine (MTA) to adenine and 5-methylthioribose-1-phosphate. Involved in the breakdown of MTA, a major by-product of polyamine biosynthesis. Responsible for the first step in the methionine salvage pathway after MTA has been generated from S-adenosylmethionine. Has broad substrate specificity with 6-aminopurine nucleosides as preferred substrates. The polypeptide is S-methyl-5'-thioadenosine phosphorylase 1 (Puccinia graminis f. sp. tritici (strain CRL 75-36-700-3 / race SCCL) (Black stem rust fungus)).